Here is a 516-residue protein sequence, read N- to C-terminus: Cyclic AMP response element-binding protein A (516 aa).

Phosphoserine occurs at positions 75, 79, and 82. Disordered stretches follow at residues Lys-213 to Gln-237, Lys-294 to Ala-338, and Pro-353 to Thr-408. Over residues Ser-221 to Gln-237 the composition is skewed to low complexity. Low complexity predominate over residues Arg-361 to Arg-392. One can recognise a bZIP domain in the interval Ser-441–Leu-504. The basic motif stretch occupies residues Lys-443–Lys-463. The leucine-zipper stretch occupies residues Leu-469–Leu-476.

Belongs to the bZIP family. As to quaternary structure, may bind DNA as heterodimers with other bZIP proteins. As to expression, in all cell types examined, including developing salivary gland in embryos and in adults, brain and optic lobe cell bodies, salivary gland, midgut epithelial cells of the cardia, female ovarian columnar follicle cells and male seminal vesicle, ejaculatory duct, and ejaculatory bulb.

The protein localises to the nucleus. Transcriptional activator. Binds to fat body-specific enhancers of alcohol dehydrogenase (ADH) and yolk protein genes. BBF-2 may play a role in fat body gene expression. It binds the consensus sequence 5'-T[AC]NACGTAN[TG]C-3'. The chain is Cyclic AMP response element-binding protein A (CrebA) from Drosophila melanogaster (Fruit fly).